We begin with the raw amino-acid sequence, 225 residues long: Probable polyketide biosynthesis zinc-dependent hydrolase PksB (225 aa).

7 residues coordinate Zn(2+): histidine 62, histidine 64, aspartate 66, histidine 67, histidine 123, aspartate 140, and histidine 181.

Belongs to the metallo-beta-lactamase superfamily. It depends on Zn(2+) as a cofactor.

It localises to the cytoplasm. It participates in antibiotic biosynthesis; bacillaene biosynthesis. Functionally, probably involved in some intermediate steps for the synthesis of the antibiotic polyketide bacillaene which is involved in secondary metabolism. The protein is Probable polyketide biosynthesis zinc-dependent hydrolase PksB (pksB) of Bacillus subtilis (strain 168).